The sequence spans 313 residues: LOB domain-containing protein 36 (313 aa).

Residues 6–107 enclose the LOB domain; the sequence is SPCAACKFLR…HDLENAKKEL (102 aa). Residues 245-313 are disordered; the sequence is GNFVDSPSTN…SEEGRRNVIG (69 aa). A compositionally biased stretch (polar residues) spans 249 to 260; it reads DSPSTNNNYHTD. The segment covering 280–302 has biased composition (low complexity); it reads PSQSSQPLPLQTQETQTQTQPNS.

It belongs to the LOB domain-containing protein family. In terms of tissue distribution, expressed in trichomes, at the base of many lateral organs, including branching points of the inflorescence and floral organs and in the distal part of the pistil at stages when style and stigma start to develop. Also detected in pedicels and at the base of petals and sepals.

Its function is as follows. Controls the proximal-distal patterning in petals and the adaxial-abaxial determination of leaves. Involved in the repression of the homeobox gene BP. This chain is LOB domain-containing protein 36 (LBD36), found in Arabidopsis thaliana (Mouse-ear cress).